The following is a 214-amino-acid chain: MRSPRRCKICAVSADQLVVDPVVAAHRLLGATITGRGVCAIVVEVEAYGGVPDGPWPDAAAHSYHGRNDRNAVMFGPPGRLYTYCSHGIHVCANVSCGPDGTAAAVLIRAGALENGADVARSRRGASVRTVALARGPGNLCSALGITMDDNGIDVFAADSPVTLVLNEAQEAMSGPRVGISHAADRPWRLWLPGRPEVSTYRRSPRAPAPGASD.

The protein belongs to the DNA glycosylase MPG family.

This chain is Putative 3-methyladenine DNA glycosylase, found in Mycobacterium leprae (strain Br4923).